Reading from the N-terminus, the 442-residue chain is Amino-acid acetyltransferase (442 aa).

One can recognise an N-acetyltransferase domain in the interval 295–442 (EQARAATIED…RSKVLSKTIS (148 aa)).

This sequence belongs to the acetyltransferase family. ArgA subfamily.

The protein resides in the cytoplasm. It catalyses the reaction L-glutamate + acetyl-CoA = N-acetyl-L-glutamate + CoA + H(+). The protein operates within amino-acid biosynthesis; L-arginine biosynthesis; N(2)-acetyl-L-ornithine from L-glutamate: step 1/4. The chain is Amino-acid acetyltransferase from Aeromonas salmonicida (strain A449).